We begin with the raw amino-acid sequence, 808 residues long: Homeobox-leucine zipper protein HDG1 (808 aa).

A disordered region spans residues 57 to 121 (LQTNGEMSRN…KRYHRHTPKQ (65 aa)). A compositionally biased stretch (basic and acidic residues) spans 79-90 (SRGEDVESRSES). Residues 108–119 (LKKKKRYHRHTP) are compositionally biased toward basic residues. A DNA-binding region (homeobox) is located at residues 110-169 (KKKRYHRHTPKQIQDLESVFKECAHPDEKQRLDLSRRLNLDPRQVKFWFQNRRTQMKTQI). Residues 158 to 233 (FQNRRTQMKT…SRLKDELDRV (76 aa)) adopt a coiled-coil conformation. In terms of domain architecture, START spans 310–541 (DFDQRSRYLD…LQRQCECLTI (232 aa)).

It belongs to the HD-ZIP homeobox family. Class IV subfamily. As to quaternary structure, interacts with CFL1. Binds with BBM. Expressed in trichomes forming at the base of young leaves, in endodermal cell lines around emergent lateral roots and in the epidermal layer of the stamen filament.

The protein localises to the nucleus. In terms of biological role, probable transcription factor. Promotes cuticle development probably by modulating the expression of the downstream genes BDG and FDH, possibly repressed in a CFL1-dependent manner. Involved, together with PDF2, in the regulation of flower organs development by promoting the expression of APETALA 3 (AP3) in the epidermis and internal cell layers of developing flowers. In opposition to BBM, seems to promote cell differentiation and giant cell identity via transcriptional repression of meristem and cell proliferation genes. The sequence is that of Homeobox-leucine zipper protein HDG1 from Arabidopsis thaliana (Mouse-ear cress).